A 518-amino-acid polypeptide reads, in one-letter code: MSKRALISVSDKEGIVEFAKKIQELGWEIISTGGTKAVLDQEEIPNIAIDEVTGFPEMMDGRVKTLHPLIHGALLGRRDLDSHMKSMAEHHISPIDLVVVNLYPFKETLLAGGSQAEMIEKIDIGGPSMLRSAAKNHAAVTVVCDPMDYEKVEKELSADGETSLELRQQLAAKVFRHTASYDALIAQYLTEEFPVEDTKPEKLTLTYDLKQGMRYGENPQQSADFYESGLPTTYSIAQSHQLHGKELSYNNVRDADAALQIARDFDEPTVVALKHMNPCGIGTAKNIEQAWDYAYEADPVSIFGGIIVLNREVTEETAQKMSKIFLEIIIAPSYSKEALEILSKKKNIRLLTVDFSKKEQSEKEALVTGVLGGLLVQNQDVIVENPKEWTVATKVQPTDRQMEAMKFAWKAVKFVKSNGIIVTNDHQTLGVGPGQTNRVGSVKIALEATADKDALLQENAVLGSDAFFPFADNIDEIAKAGIKAIVQPGGSVRDQEVIEACDKYGIAMVFTGLRHFRH.

The MGS-like domain maps to 1–144 (MSKRALISVS…KNHAAVTVVC (144 aa)).

This sequence belongs to the PurH family.

The enzyme catalyses (6R)-10-formyltetrahydrofolate + 5-amino-1-(5-phospho-beta-D-ribosyl)imidazole-4-carboxamide = 5-formamido-1-(5-phospho-D-ribosyl)imidazole-4-carboxamide + (6S)-5,6,7,8-tetrahydrofolate. It catalyses the reaction IMP + H2O = 5-formamido-1-(5-phospho-D-ribosyl)imidazole-4-carboxamide. The protein operates within purine metabolism; IMP biosynthesis via de novo pathway; 5-formamido-1-(5-phospho-D-ribosyl)imidazole-4-carboxamide from 5-amino-1-(5-phospho-D-ribosyl)imidazole-4-carboxamide (10-formyl THF route): step 1/1. It functions in the pathway purine metabolism; IMP biosynthesis via de novo pathway; IMP from 5-formamido-1-(5-phospho-D-ribosyl)imidazole-4-carboxamide: step 1/1. The protein is Bifunctional purine biosynthesis protein PurH of Lactococcus lactis subsp. cremoris (strain MG1363).